We begin with the raw amino-acid sequence, 249 residues long: RNA-free ribonuclease P (249 aa).

The segment at 226–249 (NENEPEYENRDKSKEGSSGEIEFI) is disordered. The segment covering 232–242 (YENRDKSKEGS) has biased composition (basic and acidic residues).

Belongs to the HARP family.

The enzyme catalyses Endonucleolytic cleavage of RNA, removing 5'-extranucleotides from tRNA precursor.. Functionally, RNA-free RNase P that catalyzes the removal of the 5'-leader sequence from pre-tRNA to produce the mature 5'-terminus. This is RNA-free ribonuclease P from Methanosarcina barkeri (strain Fusaro / DSM 804).